Consider the following 323-residue polypeptide: Elongation factor P--(R)-beta-lysine ligase (323 aa).

Residue 76 to 78 coordinates substrate; sequence SPE. ATP contacts are provided by residues 100–102 and Asn109; that span reads RNE. Substrate is bound at residue Tyr118. 242 to 243 serves as a coordination point for ATP; that stretch reads EL. Glu249 is a substrate binding site. Position 298 (Gly298) interacts with ATP.

It belongs to the class-II aminoacyl-tRNA synthetase family. EpmA subfamily. In terms of assembly, homodimer.

It carries out the reaction D-beta-lysine + L-lysyl-[protein] + ATP = N(6)-((3R)-3,6-diaminohexanoyl)-L-lysyl-[protein] + AMP + diphosphate + H(+). Functionally, with EpmB is involved in the beta-lysylation step of the post-translational modification of translation elongation factor P (EF-P). Catalyzes the ATP-dependent activation of (R)-beta-lysine produced by EpmB, forming a lysyl-adenylate, from which the beta-lysyl moiety is then transferred to the epsilon-amino group of a conserved specific lysine residue in EF-P. The sequence is that of Elongation factor P--(R)-beta-lysine ligase from Haemophilus influenzae (strain ATCC 51907 / DSM 11121 / KW20 / Rd).